The sequence spans 51 residues: Putative protein LomR (51 aa).

This sequence belongs to the outer membrane OOP (TC 1.B.6) superfamily. Ail family.

In Escherichia coli (strain K12), this protein is Putative protein LomR (lomR).